Consider the following 328-residue polypeptide: Telomere-binding protein cav (328 aa).

The segment at 107–320 (RRKMVQPYPE…NISLQNSGSE (214 aa)) is required for binding to Su(var)205. Residues 139 to 228 (DRWQKQKSQN…EFQTEHTDCP (90 aa)) form a disordered region. Composition is skewed to polar residues over residues 144 to 167 (QKSQ…QQDS) and 180 to 189 (ANTNRYSVSQ). Short sequence motifs (su(var)205-binding Pro-containing repeat) lie at residues 228–232 (PETQM) and 281–287 (PETETNE). Residues 295–319 (INSESMSIGPSIDSEGNISLQNSGS) are compositionally biased toward polar residues. A disordered region spans residues 295-328 (INSESMSIGPSIDSEGNISLQNSGSEPIDVDSMA).

As to quaternary structure, interacts (via C-terminus) with Su(var)205 dimer (via hinge and chromoshadow domain) and with moi to form the terminin, telomere-capping, complex. Interacts with HP6, which is also part of the terminin complex.

The protein resides in the nucleus. It localises to the chromosome. Its subcellular location is the telomere. Functionally, binds to chromosome ends in a sequence-dependent manner and is required for telomere capping. This Drosophila erecta (Fruit fly) protein is Telomere-binding protein cav.